The sequence spans 412 residues: MTLRRRGEKATISIQEHMAIDVCPGPIRPIKQISDYFPRFPRGLPPDAGPRAAAPPDAPARPAVAGAGRRSPSDGAREDDEDVDQLFGAYGSSPGPSPGPSPARPPAKPPEDEPDADGYESDDCTALGTLDFSLLYDQENNALHCTITKAKGLKPMDHNGLADPYVKLHLLPGASKANKLRTKTLRNTLNPTWNETLTYYGITDEDMIRKTLRISVCDEDKFRHNEFIGETRVPLKKLKPNHTKTFSICLEKQLPVDKTEDKSLEERGRILISLKYSSQKQGLLVGIVRCAHLAAMDANGYSDPYVKTYLRPDVDKKSKHKTAVKKKTLNPEFNEEFCYEIKHGDLAKKSLEVTVWDYDIGKSNDFIGGVVLGIHAKGERLKHWFDCLKNKDKRIERWHTLTSELPGAVLSD.

The interval 1–36 is negatively regulates targeting to plasma membrane; it reads MTLRRRGEKATISIQEHMAIDVCPGPIRPIKQISDY. A mediates interaction with DYNLT1 region spans residues 1–90; the sequence is MTLRRRGEKA…EDVDQLFGAY (90 aa). Residues 38–123 are disordered; the sequence is PRFPRGLPPD…PDADGYESDD (86 aa). The segment covering 49–70 has biased composition (low complexity); it reads GPRAAAPPDAPARPAVAGAGRR. The segment covering 95–108 has biased composition (pro residues); the sequence is GPSPGPSPARPPAK. The span at 112 to 123 shows a compositional bias: acidic residues; it reads DEPDADGYESDD. 2 C2 domains span residues 126-250 and 266-399; these read ALGT…SICL and ERGR…ERWH. Aspartate 157, aspartate 163, aspartate 218, aspartate 220, aspartate 297, aspartate 303, aspartate 357, aspartate 359, and aspartate 365 together coordinate Ca(2+). Positions 257-375 are mediates interaction with STXBP3; it reads DKTEDKSLEE…FIGGVVLGIH (119 aa). Serine 411 is subject to Phosphoserine.

In terms of assembly, interacts with the SNARE (soluble N-ethylmaleimide-sensitive factor attached protein receptor) complex composed of SNAP25, STX1A and VAMP2; the interaction is calcium-dependent and competitive with SYT1. Interacts with STX4; the interaction is calcium-dependent, increased by insulin and glucose, and mediates vesicle fusion with plasma membrane in pancreatic cells and adipocytes. Interacts with STXBP3; the interaction is direct, occurs at the cell membrane and regulates glucose-stimulated insulin secretion. May interact with UNC13A; the interaction mediates targeting to the plasma membrane. Interacts with cytoplasmic dynein light chain DYNLT1. The cofactor is Ca(2+). Widely expressed with highest levels in brain and kidney. Expressed in pancreatic islet cells (at protein level).

The protein resides in the cytoplasm. The protein localises to the cytoplasmic granule. It is found in the cell membrane. In terms of biological role, calcium sensor which positively regulates SNARE-dependent fusion of vesicles with membranes. Binds phospholipids in a calcium-dependent manner and may act at the priming stage of fusion by modifying membrane curvature to stimulate fusion. Involved in calcium-triggered exocytosis in chromaffin cells and calcium-dependent spontaneous release of neurotransmitter in absence of action potentials in neuronal cells. Involved both in glucose-stimulated insulin secretion in pancreatic cells and insulin-dependent GLUT4 transport to the plasma membrane in adipocytes. This Homo sapiens (Human) protein is Double C2-like domain-containing protein beta.